The following is a 242-amino-acid chain: Basic agglutinin (242 aa).

Asparagine 45 and asparagine 220 each carry an N-linked (GlcNAc...) asparagine glycan.

Belongs to the leguminous lectin family.

Its function is as follows. Lectin. The polypeptide is Basic agglutinin (WBAI) (Psophocarpus tetragonolobus (Winged bean)).